Consider the following 601-residue polypeptide: Glutathione-regulated potassium-efflux system protein KefB (601 aa).

13 consecutive transmembrane segments (helical) span residues 4 to 24 (ADLLTAGVLFLFAAVAAVPLA), 29 to 49 (IGAVLGYLLAGIAIGPWGLGF), 55 to 75 (EILHFSELGVVFLMFIIGLEL), 87 to 107 (IFGVGAAQVLLSAAVLAGLLM), 111 to 131 (FLWQAAVVGGIGLAMSSTAMA), 152 to 172 (VLLFQDLAVIPALALVPLLAG), 177 to 197 (HFDWFKVAMKVLAFAVMLIGG), 207 to 227 (FIAASGVREVFTAATLLLVLS), 230 to 250 (LFMDALGLSMALGTFIAGVLL), 262 to 282 (AIDPFKGLLLGLFFISVGMSL), 284 to 304 (LGVLYTHLLWVAASVVILVVI), 324 to 344 (MQFASVLSQGGEFAFVLFSTA), and 356 to 376 (ALLLVTVTLSMMTTPLLMKGI). Positions 400–519 (KPQVIVVGFG…AGVTQFSRET (120 aa)) constitute an RCK N-terminal domain.

This sequence belongs to the monovalent cation:proton antiporter 2 (CPA2) transporter (TC 2.A.37) family. KefB subfamily. Interacts with the regulatory subunit KefG.

Its subcellular location is the cell inner membrane. Its function is as follows. Pore-forming subunit of a potassium efflux system that confers protection against electrophiles. Catalyzes K(+)/H(+) antiport. The chain is Glutathione-regulated potassium-efflux system protein KefB from Salmonella paratyphi C (strain RKS4594).